Consider the following 198-residue polypeptide: Ribonuclease HII (198 aa).

The RNase H type-2 domain occupies 10–198 (QLVAGVDEVG…PVKRALGLAS (189 aa)). Asp-16, Glu-17, and Asp-108 together coordinate a divalent metal cation.

Belongs to the RNase HII family. The cofactor is Mn(2+). It depends on Mg(2+) as a cofactor.

Its subcellular location is the cytoplasm. It carries out the reaction Endonucleolytic cleavage to 5'-phosphomonoester.. Functionally, endonuclease that specifically degrades the RNA of RNA-DNA hybrids. In Escherichia fergusonii (strain ATCC 35469 / DSM 13698 / CCUG 18766 / IAM 14443 / JCM 21226 / LMG 7866 / NBRC 102419 / NCTC 12128 / CDC 0568-73), this protein is Ribonuclease HII.